A 359-amino-acid chain; its full sequence is Histamine H2 receptor (359 aa).

Residues methionine 1–threonine 22 are Extracellular-facing. Asparagine 4 is a glycosylation site (N-linked (GlcNAc...) asparagine). Residues valine 23–glycine 44 form a helical membrane-spanning segment. The Cytoplasmic segment spans residues leucine 45–isoleucine 57. A helical membrane pass occupies residues valine 58–serine 81. Residues cysteine 82–asparagine 92 lie on the Extracellular side of the membrane. Cysteine 91 and cysteine 174 are oxidised to a cystine. The chain crosses the membrane as a helical span at residues isoleucine 93–leucine 114. Residues aspartate 115–arginine 134 lie on the Cytoplasmic side of the membrane. Residues valine 135–asparagine 159 traverse the membrane as a helical segment. At serine 160–glutamate 180 the chain is on the extracellular side. A helical membrane pass occupies residues valine 181–arginine 204. Over isoleucine 205–valine 234 the chain is Cytoplasmic. A helical membrane pass occupies residues threonine 235 to glycine 258. Over leucine 259 to glutamate 267 the chain is Extracellular. A helical membrane pass occupies residues valine 268 to alanine 289. Residues alanine 290 to arginine 359 lie on the Cytoplasmic side of the membrane. Cysteine 305 is lipidated: S-palmitoyl cysteine. The interval serine 316–leucine 340 is disordered. The span at leucine 317–threonine 327 shows a compositional bias: polar residues. Over residues glutamine 328 to leucine 340 the composition is skewed to basic and acidic residues.

This sequence belongs to the G-protein coupled receptor 1 family.

The protein resides in the cell membrane. Functionally, the H2 subclass of histamine receptors mediates gastric acid secretion. Also appears to regulate gastrointestinal motility and intestinal secretion. Possible role in regulating cell growth and differentiation. The activity of this receptor is mediated by G proteins which activate adenylyl cyclase and, through a separate G protein-dependent mechanism, the phosphoinositide/protein kinase (PKC) signaling pathway. This Gorilla gorilla gorilla (Western lowland gorilla) protein is Histamine H2 receptor (HRH2).